A 616-amino-acid polypeptide reads, in one-letter code: uncharacterized protein (616 aa).

2 disordered regions span residues 166–243 (SRTY…TPEL) and 272–298 (DHEE…IEEI). The span at 184 to 200 (RVDESRPSENSSRHDYV) shows a compositional bias: basic and acidic residues. Positions 221 to 237 (TRTSNVTQTQPPTNQVF) are enriched in polar residues. The span at 272-287 (DHEEEEGQDDDEETEI) shows a compositional bias: acidic residues. In terms of domain architecture, Ubiquitin-like spans 343–417 (ILIKLKFMND…VHCHISTTPY (75 aa)).

This is an uncharacterized protein from Caenorhabditis elegans.